The following is a 155-amino-acid chain: Protein-export protein SecB (155 aa).

The protein belongs to the SecB family. Homotetramer, a dimer of dimers. One homotetramer interacts with 1 SecA dimer.

It is found in the cytoplasm. One of the proteins required for the normal export of preproteins out of the cell cytoplasm. It is a molecular chaperone that binds to a subset of precursor proteins, maintaining them in a translocation-competent state. It also specifically binds to its receptor SecA. This is Protein-export protein SecB from Enterobacter sp. (strain 638).